The following is a 186-amino-acid chain: uncharacterized protein (186 aa).

3 helical membrane-spanning segments follow: residues 42 to 62, 80 to 100, and 131 to 151; these read ISIA…LSVL, LLFL…IGLV, and ICGI…FIVL.

The protein to U.parvum UU008, UU041 and UU042.

The protein resides in the cell membrane. This is an uncharacterized protein from Ureaplasma parvum serovar 3 (strain ATCC 700970).